The following is a 1107-amino-acid chain: Rho GTPase-activating protein 45 (1107 aa).

The interval 1-99 (MFSRKKRELM…SPPESGEGPF (99 aa)) is disordered. Over residues 37–55 (DSSNDLASSPPSNSSPVSS) the composition is skewed to low complexity. The span at 56 to 66 (GTLKRPSSLSR) shows a compositional bias: polar residues. 2 coiled-coil regions span residues 103-132 (EDIS…EELK) and 363-485 (NMRR…QSDQ). One can recognise an F-BAR domain in the interval 261–524 (EDVDVILQRS…SSKLYDLGQQ (264 aa)). Basic and acidic residues-rich tracts occupy residues 414-423 (NATRAEEEQS), 434-444 (RRAEEEAKNRA), and 573-588 (ENKE…ERRG). Disordered regions lie at residues 414–444 (NATR…KNRA) and 564–595 (FNSQ…HQVH). Residues 671–716 (THRLRKLRTPSKCRECNSYVYFQGAECEECSLACHKKCLETLAIQC) form a Phorbol-ester/DAG-type zinc finger. Residues 730-942 (RDFSETALRS…TLIIFYSTIF (213 aa)) enclose the Rho-GAP domain. The tract at residues 981-1036 (LTPEYQIPVFKEPGASTVESDSESDGAEDIPGTWKPQTTRGHLTKEASVTSAEDIP) is disordered. Positions 1015–1031 (KPQTTRGHLTKEASVTS) are enriched in polar residues.

It is found in the cytoplasm. It localises to the cell projection. Its subcellular location is the ruffle membrane. Functionally, contains a GTPase activator for the Rho-type GTPases (RhoGAP) domain that would be able to negatively regulate the actin cytoskeleton as well as cell spreading. However, also contains N-terminally a BAR-domin which is able to play an autoinhibitory effect on this RhoGAP activity. The sequence is that of Rho GTPase-activating protein 45 from Xenopus laevis (African clawed frog).